We begin with the raw amino-acid sequence, 757 residues long: Endonuclease MutS2 (757 aa).

321–328 (GPNMGGKT) lines the ATP pocket. The Smr domain maps to 681-756 (IDIRGMTVEE…GTGVTVVEVK (76 aa)).

This sequence belongs to the DNA mismatch repair MutS family. MutS2 subfamily. In terms of assembly, homodimer. Binds to stalled ribosomes, contacting rRNA.

In terms of biological role, endonuclease that is involved in the suppression of homologous recombination and thus may have a key role in the control of bacterial genetic diversity. Acts as a ribosome collision sensor, splitting the ribosome into its 2 subunits. Detects stalled/collided 70S ribosomes which it binds and splits by an ATP-hydrolysis driven conformational change. Acts upstream of the ribosome quality control system (RQC), a ribosome-associated complex that mediates the extraction of incompletely synthesized nascent chains from stalled ribosomes and their subsequent degradation. Probably generates substrates for RQC. The polypeptide is Endonuclease MutS2 (Thermotoga sp. (strain RQ2)).